The chain runs to 370 residues: 3-dehydroquinate synthase (370 aa).

NAD(+)-binding positions include 112-116, 136-137, Lys-149, Lys-158, and 176-179; these read GVIGD, TT, and TLKT. The Zn(2+) site is built by Glu-191, His-256, and His-273.

The protein belongs to the sugar phosphate cyclases superfamily. Dehydroquinate synthase family. The cofactor is Co(2+). Requires Zn(2+) as cofactor. NAD(+) is required as a cofactor.

The protein resides in the cytoplasm. It carries out the reaction 7-phospho-2-dehydro-3-deoxy-D-arabino-heptonate = 3-dehydroquinate + phosphate. Its pathway is metabolic intermediate biosynthesis; chorismate biosynthesis; chorismate from D-erythrose 4-phosphate and phosphoenolpyruvate: step 2/7. In terms of biological role, catalyzes the conversion of 3-deoxy-D-arabino-heptulosonate 7-phosphate (DAHP) to dehydroquinate (DHQ). The protein is 3-dehydroquinate synthase of Prochlorococcus marinus (strain MIT 9211).